We begin with the raw amino-acid sequence, 246 residues long: Probable transcriptional regulatory protein Dole_0371 (246 aa).

This sequence belongs to the TACO1 family.

Its subcellular location is the cytoplasm. The protein is Probable transcriptional regulatory protein Dole_0371 of Desulfosudis oleivorans (strain DSM 6200 / JCM 39069 / Hxd3) (Desulfococcus oleovorans).